The sequence spans 283 residues: Pantothenate synthetase (283 aa).

30 to 37 is an ATP binding site; sequence MGALHEGH. The active-site Proton donor is H37. Q61 contacts (R)-pantoate. Beta-alanine is bound at residue Q61. Position 150 to 153 (150 to 153) interacts with ATP; sequence GRKD. A (R)-pantoate-binding site is contributed by Q156. ATP is bound by residues V179 and 187–190; that span reads MSSR.

The protein belongs to the pantothenate synthetase family. As to quaternary structure, homodimer.

The protein localises to the cytoplasm. The catalysed reaction is (R)-pantoate + beta-alanine + ATP = (R)-pantothenate + AMP + diphosphate + H(+). The protein operates within cofactor biosynthesis; (R)-pantothenate biosynthesis; (R)-pantothenate from (R)-pantoate and beta-alanine: step 1/1. Catalyzes the condensation of pantoate with beta-alanine in an ATP-dependent reaction via a pantoyl-adenylate intermediate. The polypeptide is Pantothenate synthetase (Rhodopirellula baltica (strain DSM 10527 / NCIMB 13988 / SH1)).